Reading from the N-terminus, the 570-residue chain is Sulfite reductase [NADPH] hemoprotein beta-component (570 aa).

4 residues coordinate [4Fe-4S] cluster: C434, C440, C479, and C483. Position 483 (C483) interacts with siroheme.

This sequence belongs to the nitrite and sulfite reductase 4Fe-4S domain family. In terms of assembly, alpha(8)-beta(8). The alpha component is a flavoprotein, the beta component is a hemoprotein. It depends on siroheme as a cofactor. Requires [4Fe-4S] cluster as cofactor.

The catalysed reaction is hydrogen sulfide + 3 NADP(+) + 3 H2O = sulfite + 3 NADPH + 4 H(+). It functions in the pathway sulfur metabolism; hydrogen sulfide biosynthesis; hydrogen sulfide from sulfite (NADPH route): step 1/1. In terms of biological role, component of the sulfite reductase complex that catalyzes the 6-electron reduction of sulfite to sulfide. This is one of several activities required for the biosynthesis of L-cysteine from sulfate. This Salmonella gallinarum (strain 287/91 / NCTC 13346) protein is Sulfite reductase [NADPH] hemoprotein beta-component.